The following is a 554-amino-acid chain: Solute carrier family 22 member 2 (554 aa).

Residues 1-21 lie on the Cytoplasmic side of the membrane; that stretch reads MPTVDDILEQVGHFHFFQKQT. Residues 22-42 traverse the membrane as a helical segment; that stretch reads FFLLALISAAFTPIYVGIVFL. The Extracellular segment spans residues 43-149; sequence GFTPDHRCRS…LVCARSWMLD (107 aa). A glycan (N-linked (GlcNAc...) asparagine) is linked at Asn71. Residues 150-170 traverse the membrane as a helical segment; sequence LFQSAVNIGFFIGSVGIGYLA. The Cytoplasmic portion of the chain corresponds to 171 to 176; sequence DRFGRK. Residues 177–197 form a helical membrane-spanning segment; it reads LCLLVTILINAAAGVLMAVSP. Asn198 carries an N-linked (GlcNAc...) asparagine glycan. Over 198-209 the chain is Extracellular; the sequence is NYTWMLIFRLIQ. Residues 210–230 form a helical membrane-spanning segment; the sequence is GLVSKAGWLIGYILITEFVGL. Residues 231–237 lie on the Cytoplasmic side of the membrane; sequence NYRRTVG. A helical membrane pass occupies residues 238 to 258; it reads ILYQVAFTVGLLVLAGVAYAL. The Extracellular segment spans residues 259–262; that stretch reads PRWR. Residues 263–283 traverse the membrane as a helical segment; the sequence is WLQLTVTLPYFCFLLYYWCIP. Residues 283-287 carry the Proline-rich sequence motif; the sequence is PESPR. Over 284-348 the chain is Cytoplasmic; the sequence is ESPRWLISQN…RTPQIRKHTC (65 aa). The helical transmembrane segment at 349–369 threads the bilayer; that stretch reads ILMYNWFTSSVLYQGLIMHLG. Topologically, residues 370-374 are extracellular; the sequence is LAGGD. A helical transmembrane segment spans residues 375 to 395; sequence IYLDFFYSALVEFPAAFLIIA. At 396 to 403 the chain is on the cytoplasmic side; the sequence is TIDRVGRR. The chain crosses the membrane as a helical span at residues 404 to 424; that stretch reads YPWAVSNMVAGAACLASVFVP. Residues 425–427 lie on the Extracellular side of the membrane; that stretch reads DDL. Residues 428–450 form a helical membrane-spanning segment; it reads QGLRITVACLGRMGITMAYEMVC. Residues 451–463 are Cytoplasmic-facing; that stretch reads LVNAELYPTFIRN. Residues 464-484 form a helical membrane-spanning segment; sequence LGVLVCSSLCDVGGIVTPFLV. At 485 to 493 the chain is on the extracellular side; it reads YRLTAIWLQ. Residues 494 to 514 traverse the membrane as a helical segment; it reads LPLVVFAVVGLVAGGLVLMLP. The Cytoplasmic segment spans residues 515 to 554; the sequence is ETKGRTLPETIEEAENLQRPRKNREKVIYVHVRKADGPLT.

This sequence belongs to the major facilitator (TC 2.A.1) superfamily. Organic cation transporter (TC 2.A.1.19) family. In terms of processing, tyrosine phosphorylated. In terms of tissue distribution, expressed in kidney.

It is found in the basolateral cell membrane. Its subcellular location is the basal cell membrane. The enzyme catalyses (R)-noradrenaline(out) = (R)-noradrenaline(in). The catalysed reaction is (R)-adrenaline(out) = (R)-adrenaline(in). It catalyses the reaction serotonin(out) = serotonin(in). It carries out the reaction dopamine(out) = dopamine(in). The enzyme catalyses histamine(out) = histamine(in). The catalysed reaction is thiamine(in) = thiamine(out). It catalyses the reaction creatinine(in) = creatinine(out). It carries out the reaction 1-methylnicotinamide(out) = 1-methylnicotinamide(in). The enzyme catalyses guanidine(out) = guanidine(in). The catalysed reaction is choline(out) = choline(in). It catalyses the reaction agmatine(out) = agmatine(in). It carries out the reaction putrescine(out) = putrescine(in). The enzyme catalyses spermidine(in) = spermidine(out). The catalysed reaction is tyramine(in) = tyramine(out). It catalyses the reaction L-histidyl-L-proline diketopiperazine(in) = L-histidyl-L-proline diketopiperazine(out). It carries out the reaction (R)-salsolinol(in) = (R)-salsolinol(out). The enzyme catalyses N-methyl-(R)-salsolinol(in) = N-methyl-(R)-salsolinol(out). The catalysed reaction is acetylcholine(in) = acetylcholine(out). It catalyses the reaction prostaglandin F2alpha(out) = prostaglandin F2alpha(in). It carries out the reaction prostaglandin E2(out) = prostaglandin E2(in). With respect to regulation, tyrosine phosphorylation of the transporter leads to activation of the transport activity. Inhibited by cGMP, most likely through a cGMP-binding protein that interacts with OCT2. Functionally, electrogenic voltage-dependent transporter that mediates the transport of a variety of organic cations such as endogenous bioactive amines, cationic drugs and xenobiotics. Functions as a Na(+)-independent, bidirectional uniporter. Cation cellular uptake or release is driven by the electrochemical potential, i.e. membrane potential and concentration gradient. However, may also engage electroneutral cation exchange when saturating concentrations of cation substrates are reached. Predominantly expressed at the basolateral membrane of hepatocytes and proximal tubules and involved in the uptake and disposition of cationic compounds by hepatic and renal clearance from the blood flow. Implicated in monoamine neurotransmitters uptake such as histamine, dopamine, adrenaline/epinephrine, noradrenaline/norepinephrine, serotonin and tyramine, thereby supporting a physiological role in the central nervous system by regulating interstitial concentrations of neurotransmitters. Also capable of transporting dopaminergic neuromodulators cyclo(his-pro), salsolinol and N-methyl-salsolinol, thereby involved in the maintenance of dopaminergic cell integrity in the central nervous system. Mediates the bidirectional transport of acetylcholine (ACh) at the apical membrane of ciliated cell in airway epithelium, thereby playing a role in luminal release of ACh from bronchial epithelium. Also transports guanidine and endogenous monoamines such as vitamin B1/thiamine, creatinine and N-1-methylnicotinamide (NMN). Mediates the uptake and efflux of quaternary ammonium compound choline. Mediates the bidirectional transport of polyamine agmatine and the uptake of polyamines putrescine and spermidine. Able to transport non-amine endogenous compounds such as prostaglandin E2 (PGE2) and prostaglandin F2-alpha (PGF2-alpha). Also involved in the uptake of xenobiotic 4-(4-(dimethylamino)styryl)-N-methylpyridinium (ASP). May contribute to regulate the transport of organic compounds in testis across the blood-testis-barrier. This is Solute carrier family 22 member 2 (SLC22A2) from Oryctolagus cuniculus (Rabbit).